Consider the following 53-residue polypeptide: Large ribosomal subunit protein eL40 (53 aa).

The protein belongs to the eukaryotic ribosomal protein eL40 family.

The polypeptide is Large ribosomal subunit protein eL40 (Pyrobaculum islandicum (strain DSM 4184 / JCM 9189 / GEO3)).